We begin with the raw amino-acid sequence, 457 residues long: Siroheme synthase (457 aa).

A precorrin-2 dehydrogenase /sirohydrochlorin ferrochelatase region spans residues 1–204; the sequence is MDHLPIFCQL…ADEKAVNATT (204 aa). NAD(+) is bound by residues 22–23 and 43–44; these read DV and LN. Ser128 bears the Phosphoserine mark. Residues 216–457 are uroporphyrinogen-III C-methyltransferase; the sequence is GEVVLVGAGP…RDKLNWFSNH (242 aa). Residue Pro225 coordinates S-adenosyl-L-methionine. Asp248 functions as the Proton acceptor in the catalytic mechanism. The Proton donor role is filled by Lys270. S-adenosyl-L-methionine is bound by residues 301-303, Ile306, 331-332, Met382, and Gly411; these read GGD and TA.

This sequence in the N-terminal section; belongs to the precorrin-2 dehydrogenase / sirohydrochlorin ferrochelatase family. It in the C-terminal section; belongs to the precorrin methyltransferase family.

It carries out the reaction uroporphyrinogen III + 2 S-adenosyl-L-methionine = precorrin-2 + 2 S-adenosyl-L-homocysteine + H(+). It catalyses the reaction precorrin-2 + NAD(+) = sirohydrochlorin + NADH + 2 H(+). The enzyme catalyses siroheme + 2 H(+) = sirohydrochlorin + Fe(2+). Its pathway is cofactor biosynthesis; adenosylcobalamin biosynthesis; precorrin-2 from uroporphyrinogen III: step 1/1. The protein operates within cofactor biosynthesis; adenosylcobalamin biosynthesis; sirohydrochlorin from precorrin-2: step 1/1. It participates in porphyrin-containing compound metabolism; siroheme biosynthesis; precorrin-2 from uroporphyrinogen III: step 1/1. It functions in the pathway porphyrin-containing compound metabolism; siroheme biosynthesis; siroheme from sirohydrochlorin: step 1/1. Its pathway is porphyrin-containing compound metabolism; siroheme biosynthesis; sirohydrochlorin from precorrin-2: step 1/1. In terms of biological role, multifunctional enzyme that catalyzes the SAM-dependent methylations of uroporphyrinogen III at position C-2 and C-7 to form precorrin-2 via precorrin-1. Then it catalyzes the NAD-dependent ring dehydrogenation of precorrin-2 to yield sirohydrochlorin. Finally, it catalyzes the ferrochelation of sirohydrochlorin to yield siroheme. This is Siroheme synthase from Salmonella paratyphi A (strain ATCC 9150 / SARB42).